Reading from the N-terminus, the 353-residue chain is MEKFKAAMLLGSVGDALGYGNICRENSVLGSIQEELQKTGGLDSLVLSPGRWPVSDNTIMHMATAEALTTDYWCLDDLYREMVKRYVETVETLSEHRPDPSTIEGCSQLKPDNYLLAWHTPFSEKGSGFGAATKAMCIGMRYWKPERLETLIEVSIECGRMTHNHPTGFLGSLCTALFASYALQGKPLVQWGREMLKVLPLAEEYCRKTIRHMAEYQEHWFYFEAKWQFYLEERKIREDAEDKVTFPDNYDAEERDKTYKKWSSEGRGGRRGHDAPMIAYDALLASGSNWTELCQRAMFHGGESGATGTIAGCLFGLLHGLATVPRGLYQELEHKGRLEDLGAALHRLSTEEK.

Ser27 carries the phosphoserine modification.

The protein belongs to the ADP-ribosylglycohydrolase family. Expressed in the embryonic heart at E11.5.

It is found in the cytoplasm. The protein localises to the myofibril. The protein resides in the sarcomere. Required for myofibril assembly and outgrowth of the cardiac chambers in the developing heart. Appears to be catalytically inactive, showing no activity against O-acetyl-ADP-ribose. The chain is Inactive ADP-ribosyltransferase ARH2 (Adprhl1) from Mus musculus (Mouse).